The sequence spans 163 residues: Nucleotide-binding protein BC_1159 (163 aa).

Belongs to the YajQ family.

Its function is as follows. Nucleotide-binding protein. The chain is Nucleotide-binding protein BC_1159 from Bacillus cereus (strain ATCC 14579 / DSM 31 / CCUG 7414 / JCM 2152 / NBRC 15305 / NCIMB 9373 / NCTC 2599 / NRRL B-3711).